The sequence spans 218 residues: Glutathione S-transferase class-mu 26 kDa isozyme (218 aa).

In terms of domain architecture, GST N-terminal spans 1 to 83 (MAPKFGYWKV…YIADKHNMLG (83 aa)). Glutathione-binding positions include 7-8 (YW), 41-45 (WSNDK), 54-55 (NL), and 67-68 (QS). The GST C-terminal domain occupies 85–203 (CPKERAEISM…NSSRYIKWPL (119 aa)). Tyr-111 contributes to the substrate binding site.

It belongs to the GST superfamily. Mu family. In terms of assembly, homodimer. In terms of tissue distribution, tegument and in subtegumentary parenchymal cells. GST 26 may be actively excreted by adult worms.

It catalyses the reaction RX + glutathione = an S-substituted glutathione + a halide anion + H(+). Its function is as follows. Conjugation of reduced glutathione to a wide number of exogenous and endogenous hydrophobic electrophiles. GST isoenzymes appear to play a central role in the parasite detoxification system. Other functions are also suspected including a role in increasing the solubility of haematin in the parasite gut. The chain is Glutathione S-transferase class-mu 26 kDa isozyme from Schistosoma mansoni (Blood fluke).